An 887-amino-acid chain; its full sequence is 3-hydroxy-3-methylglutaryl-coenzyme A reductase (887 aa).

Topologically, residues 1-9 (MLSRLFRMH) are cytoplasmic. A helical transmembrane segment spans residues 10-39 (GLFVASHPWEVIVGTVTLTICMMSMNMFTG). Residues 40–56 (NNKICGWNYECPKFEED) are Lumenal-facing. A helical membrane pass occupies residues 57–78 (VLSSDIIILTITRCIAILYIYF). Residues 61–218 (DIIILTITRC…MTFFPACVSL (158 aa)) enclose the SSD domain. Residues 75–78 (YIYF) carry the INSIG-binding motif motif. The Cytoplasmic portion of the chain corresponds to 79-89 (QFQNLRQLGSK). Residue lysine 89 forms a Glycyl lysine isopeptide (Lys-Gly) (interchain with G-Cter in ubiquitin) linkage. The helical transmembrane segment at 90–114 (YILGIAGLFTIFSSFVFSTVVIHFL) threads the bilayer. Over 115–123 (DKELTGLNE) the chain is Lumenal. The helical transmembrane segment at 124-149 (ALPFFLLLIDLSRASALAKFALSSNS) threads the bilayer. Over 150 to 159 (QDEVRENIAR) the chain is Cytoplasmic. The helical transmembrane segment at 160-187 (GMAILGPTFTLDALVECLVIGVGTMSGV) threads the bilayer. Topologically, residues 188–191 (RQLE) are lumenal. Residues 192 to 220 (IMCCFGCMSVLANYFVFMTFFPACVSLVL) form a helical membrane-spanning segment. Over 221-248 (ELSRESREGRPIWQLSHFARVLEEEENK) the chain is Cytoplasmic. Residue lysine 248 forms a Glycyl lysine isopeptide (Lys-Gly) (interchain with G-Cter in ubiquitin) linkage. The chain crosses the membrane as a helical span at residues 249 to 275 (PNPVTQRVKMIMSLGLVLVHAHSRWIA). Residues 276–314 (DPSPQNSTAEQSKVSLGLAEDVSKRIEPSVSLWQFYLSK) are Lumenal-facing. An N-linked (GlcNAc...) asparagine glycan is attached at asparagine 281. Residues 315 to 339 (MISMDIEQVITLSLALLLAVKYIFF) traverse the membrane as a helical segment. At 340-887 (EQAETESTLS…LQGTCTKKAA (548 aa)) the chain is on the cytoplasmic side. Active-site charge relay system residues include glutamate 558, lysine 690, and aspartate 766. Histidine 865 functions as the Proton donor in the catalytic mechanism. Phosphoserine; by AMPK is present on serine 871.

This sequence belongs to the HMG-CoA reductase family. In terms of assembly, homotetramer. Homodimer. Interacts (via its SSD) with INSIG1; the interaction, accelerated by sterols, leads to the recruitment of HMGCR to AMFR/gp78 for its ubiquitination by the sterol-mediated ERAD pathway. Interacts with UBIAD1. In terms of processing, undergoes sterol-mediated ubiquitination and ER-associated degradation (ERAD). Accumulation of sterols in the endoplasmic reticulum (ER) membrane, triggers binding of the reductase to the ER membrane protein INSIG1 or INSIG2. The INSIG1 binding leads to the recruitment of the ubiquitin ligase, AMFR/gp78, RNF139 or RNF145, initiating ubiquitination of the reductase. The ubiquitinated reductase is then extracted from the ER membrane and delivered to cytosolic 26S proteosomes by a mechanism probably mediated by the ATPase Valosin-containing protein VCP/p97. The INSIG2-binding leads to the recruitment of the ubiquitin ligase RNF139, initiating ubiquitination of the reductase. Lys-248 is the main site of ubiquitination. Ubiquitination is enhanced by the presence of a geranylgeranylated protein. N-glycosylated. Deglycosylated by NGLY1 on release from the endoplasmic reticulum (ER) in a sterol-mediated manner. Post-translationally, phosphorylated. Phosphorylation at Ser-871 reduces the catalytic activity.

The protein localises to the endoplasmic reticulum membrane. It is found in the peroxisome membrane. It catalyses the reaction (R)-mevalonate + 2 NADP(+) + CoA = (3S)-3-hydroxy-3-methylglutaryl-CoA + 2 NADPH + 2 H(+). The protein operates within metabolic intermediate biosynthesis; (R)-mevalonate biosynthesis; (R)-mevalonate from acetyl-CoA: step 3/3. Its activity is regulated as follows. Regulated by a negative feedback mechanism through sterols and non-sterol metabolites derived from mevalonate. Phosphorylation at Ser-871 down-regulates the catalytic activity. Its function is as follows. Catalyzes the conversion of (3S)-hydroxy-3-methylglutaryl-CoA (HMG-CoA) to mevalonic acid, the rate-limiting step in the synthesis of cholesterol and other isoprenoids, thus plays a critical role in cellular cholesterol homeostasis. This Rattus norvegicus (Rat) protein is 3-hydroxy-3-methylglutaryl-coenzyme A reductase (Hmgcr).